The following is a 550-amino-acid chain: ATP synthase subunit alpha (550 aa).

Residue 172-179 (GDRKTGKT) participates in ATP binding. Residues 514-550 (EDEQRVNEPPAKPLAGEENRETVTRFRDGTTDRPAES) form a disordered region. The segment covering 528–550 (AGEENRETVTRFRDGTTDRPAES) has biased composition (basic and acidic residues).

It belongs to the ATPase alpha/beta chains family. As to quaternary structure, F-type ATPases have 2 components, CF(1) - the catalytic core - and CF(0) - the membrane proton channel. CF(1) has five subunits: alpha(3), beta(3), gamma(1), delta(1), epsilon(1). CF(0) has three main subunits: a(1), b(2) and c(9-12). The alpha and beta chains form an alternating ring which encloses part of the gamma chain. CF(1) is attached to CF(0) by a central stalk formed by the gamma and epsilon chains, while a peripheral stalk is formed by the delta and b chains.

It localises to the cell membrane. It carries out the reaction ATP + H2O + 4 H(+)(in) = ADP + phosphate + 5 H(+)(out). In terms of biological role, produces ATP from ADP in the presence of a proton gradient across the membrane. The alpha chain is a regulatory subunit. In Salinispora arenicola (strain CNS-205), this protein is ATP synthase subunit alpha.